A 79-amino-acid chain; its full sequence is Protein OPG081 (79 aa).

Over 2 to 8 (VDAITVL) the chain is Intravirion. A helical membrane pass occupies residues 9–29 (TAICITVLMLLMVISGTAMIV). The Virion surface portion of the chain corresponds to 30–47 (KELNPNDIFTMQSLKFNR). A helical membrane pass occupies residues 48–68 (TVTIFKYIGLFIYIPGTIILY). Residues 69 to 79 (ATYVKSLLMKN) lie on the Intravirion side of the membrane.

It belongs to the orthopoxvirus OPG081 family.

The protein localises to the virion membrane. Its function is as follows. Envelope protein. The chain is Protein OPG081 (OPG081) from Cynomys gunnisoni (Gunnison's prairie dog).